The primary structure comprises 294 residues: Large ribosomal subunit protein uL2 (294 aa).

Disordered regions lie at residues 1 to 37 (MGIRTLRPYTPSTRHMTVSDFEELSRDENGKRPRPEK) and 228 to 294 (GSVM…RAAQ). Basic and acidic residues predominate over residues 23-37 (ELSRDENGKRPRPEK). Basic residues predominate over residues 264–285 (KTRKRNKPSNKFIVRGRRRGGR).

Belongs to the universal ribosomal protein uL2 family. As to quaternary structure, part of the 50S ribosomal subunit. Forms a bridge to the 30S subunit in the 70S ribosome.

In terms of biological role, one of the primary rRNA binding proteins. Required for association of the 30S and 50S subunits to form the 70S ribosome, for tRNA binding and peptide bond formation. It has been suggested to have peptidyltransferase activity; this is somewhat controversial. Makes several contacts with the 16S rRNA in the 70S ribosome. This is Large ribosomal subunit protein uL2 from Synechococcus sp. (strain JA-2-3B'a(2-13)) (Cyanobacteria bacterium Yellowstone B-Prime).